Here is a 198-residue protein sequence, read N- to C-terminus: Potassium-transporting ATPase KdpC subunit (198 aa).

Residues 8-28 (ILAVLVFTILCGIIYPVSTTV) traverse the membrane as a helical segment.

It belongs to the KdpC family. The system is composed of three essential subunits: KdpA, KdpB and KdpC.

The protein resides in the cell membrane. Its function is as follows. Part of the high-affinity ATP-driven potassium transport (or Kdp) system, which catalyzes the hydrolysis of ATP coupled with the electrogenic transport of potassium into the cytoplasm. This subunit acts as a catalytic chaperone that increases the ATP-binding affinity of the ATP-hydrolyzing subunit KdpB by the formation of a transient KdpB/KdpC/ATP ternary complex. The protein is Potassium-transporting ATPase KdpC subunit of Clostridium perfringens (strain ATCC 13124 / DSM 756 / JCM 1290 / NCIMB 6125 / NCTC 8237 / Type A).